Here is a 1551-residue protein sequence, read N- to C-terminus: Dual oxidase 1 (1551 aa).

The N-terminal stretch at 1–21 is a signal peptide; the sequence is MAVYSAVAWILLFGVLASLGA. The Extracellular segment spans residues 22 to 596; sequence QNPVSWEVQR…YFKGSGFGFG (575 aa). Residues 26–593 are peroxidase-like; mediates peroxidase activity; the sequence is SWEVQRFDGW…VRDYFKGSGF (568 aa). 5 N-linked (GlcNAc...) asparagine glycosylation sites follow: asparagine 94, asparagine 342, asparagine 354, asparagine 461, and asparagine 534. The helical transmembrane segment at 597 to 617 threads the bilayer; the sequence is LTIGTLCCFPLVSLLSAWIVA. The Cytoplasmic portion of the chain corresponds to 618-1044; it reads RLRMRNFKRL…KRFIENYRRH (427 aa). EF-hand domains follow at residues 815–850, 851–886, and 895–930; these read PQDMFVESMFSLADKDGNGYLSFREFLDILVVFMKG, SPEEKSRLMFRMYDFDGNGLISKDEFIRMLRSFIEI, and QLAEVVESMFRESGFQDKEELTWEDFHFMLRDHDSD. Ca(2+)-binding residues include aspartate 828, aspartate 830, asparagine 832, tyrosine 834, glutamate 839, aspartate 864, aspartate 866, asparagine 868, and glutamate 875. The interval 956–1248 is interaction with TXNDC11; sequence YISQEKICPS…GSFALIQMPR (293 aa). A helical transmembrane segment spans residues 1045–1065; sequence IGCVAVFYTITGALFLERAYY. Residues 1066-1080 are Extracellular-facing; the sequence is YAFAAHHSGITDTTR. A helical membrane pass occupies residues 1081–1101; sequence VGIILSRGTAASISFMFSYIL. Positions 1087-1269 constitute a Ferric oxidoreductase domain; the sequence is RGTAASISFM…YVGDKLVSLS (183 aa). Topologically, residues 1102–1136 are cytoplasmic; that stretch reads LTMCRNLITFLRETFLNRYIPFDAAVDFHRFIAST. The helical transmembrane segment at 1137–1157 threads the bilayer; that stretch reads AIILTVLHSAGHVVNVYLFSI. The Extracellular segment spans residues 1158–1188; sequence SPLSVLSCLFPDLFHDDGSEFPQKYYWWFFQ. Residues 1189-1209 form a helical membrane-spanning segment; it reads TVPGLTGVLLLLALAIMYVFA. The Cytoplasmic portion of the chain corresponds to 1210–1226; sequence SHHFRRRSFRGFWLTHH. The chain crosses the membrane as a helical span at residues 1227 to 1247; that stretch reads LYIFLYILLIIHGSFALIQMP. Position 1248 (arginine 1248) is a topological domain, extracellular. Residues 1249–1269 traverse the membrane as a helical segment; sequence FHIFFLVPAIIYVGDKLVSLS. Residues 1270–1376 form the FAD-binding FR-type domain; it reads RKKVEISVVK…DGPFGEGHQE (107 aa). The Cytoplasmic segment spans residues 1270–1551; that stretch reads RKKVEISVVK…THFSHHYENF (282 aa).

This sequence in the N-terminal section; belongs to the peroxidase family. In terms of assembly, interacts with TXNDC11, TPO and CYBA. In terms of processing, N-glycosylated. As to expression, expressed in thyrocytes (at protein level).

Its subcellular location is the apical cell membrane. The catalysed reaction is NADH + O2 + H(+) = H2O2 + NAD(+). The enzyme catalyses NADPH + O2 + H(+) = H2O2 + NADP(+). Its pathway is hormone biosynthesis; thyroid hormone biosynthesis. Its activity is regulated as follows. The NADPH oxidase activity is calcium-dependent. Peroxidase activity is inhibited by aminobenzohydrazide. Its function is as follows. Generates hydrogen peroxide which is required for the activity of thyroid peroxidase/TPO and lactoperoxidase/LPO. Plays a role in thyroid hormones synthesis and lactoperoxidase-mediated antimicrobial defense at the surface of mucosa. May have its own peroxidase activity through its N-terminal peroxidase-like domain. The sequence is that of Dual oxidase 1 (Duox1) from Rattus norvegicus (Rat).